The following is an 802-amino-acid chain: Sucrose synthase 1 (802 aa).

Positions 272-749 are GT-B glycosyltransferase; the sequence is MMFNVVILSP…GLQRIYEKYT (478 aa).

This sequence belongs to the glycosyltransferase 1 family. Plant sucrose synthase subfamily.

The enzyme catalyses an NDP-alpha-D-glucose + D-fructose = a ribonucleoside 5'-diphosphate + sucrose + H(+). Functionally, sucrose-cleaving enzyme that provides UDP-glucose and fructose for various metabolic pathways. Most active in the sink tissues where it is responsible for the breakdown of the arriving sucrose. The sequence is that of Sucrose synthase 1 (SH-1) from Zea mays (Maize).